Reading from the N-terminus, the 308-residue chain is uncharacterized protein (308 aa).

Helical transmembrane passes span 6 to 26 (VVLI…FGIL), 31 to 51 (AKIL…FLTI), 63 to 83 (FLKL…LAYL), 100 to 120 (ILVS…LGMF), 128 to 148 (AIFC…YVGI), 162 to 182 (MAKF…FFGF), 195 to 215 (LNYL…LSLS), 221 to 241 (FGVF…PATA), 257 to 277 (VLLV…GTLY), and 287 to 307 (SIFI…WILL).

It belongs to the auxin efflux carrier (TC 2.A.69) family.

The protein localises to the cell membrane. This is an uncharacterized protein from Methanocaldococcus jannaschii (strain ATCC 43067 / DSM 2661 / JAL-1 / JCM 10045 / NBRC 100440) (Methanococcus jannaschii).